A 311-amino-acid chain; its full sequence is Peptide methionine sulfoxide reductase MsrA/MsrB (311 aa).

The interval 1–155 (MAEIYLAGGC…PGGYCHINVN (155 aa)) is peptide methionine sulfoxide reductase A. C10 is an active-site residue. The MsrB domain occupies 172-295 (DAELKEQLTQ…NSAALRFIPK (124 aa)). C284 serves as the catalytic Nucleophile.

It in the N-terminal section; belongs to the MsrA Met sulfoxide reductase family. The protein in the C-terminal section; belongs to the MsrB Met sulfoxide reductase family.

It catalyses the reaction L-methionyl-[protein] + [thioredoxin]-disulfide + H2O = L-methionyl-(S)-S-oxide-[protein] + [thioredoxin]-dithiol. The enzyme catalyses [thioredoxin]-disulfide + L-methionine + H2O = L-methionine (S)-S-oxide + [thioredoxin]-dithiol. It carries out the reaction L-methionyl-[protein] + [thioredoxin]-disulfide + H2O = L-methionyl-(R)-S-oxide-[protein] + [thioredoxin]-dithiol. Functionally, has an important function as a repair enzyme for proteins that have been inactivated by oxidation. Catalyzes the reversible oxidation-reduction of methionine sulfoxide in proteins to methionine. Involved in protection against oxidative stress when the bacterium enters the host bloodstream and required for maximal growth under aerobic and anaerobic conditions. In Streptococcus gordonii (strain Challis / ATCC 35105 / BCRC 15272 / CH1 / DL1 / V288), this protein is Peptide methionine sulfoxide reductase MsrA/MsrB (msrAB).